The following is a 518-amino-acid chain: Protein translocase subunit SecD (518 aa).

6 helical membrane-spanning segments follow: residues 9 to 29 (IFLS…NFMQ), 361 to 381 (LIGF…LGLF), 384 to 404 (IALS…QATL), 406 to 426 (LPGI…NVLI), 452 to 474 (FATI…IFGV), and 486 to 506 (IGII…IDIW).

This sequence belongs to the SecD/SecF family. SecD subfamily. As to quaternary structure, forms a complex with SecF. Part of the essential Sec protein translocation apparatus which comprises SecA, SecYEG and auxiliary proteins SecDF-YajC and YidC.

The protein localises to the cell inner membrane. Part of the Sec protein translocase complex. Interacts with the SecYEG preprotein conducting channel. SecDF uses the proton motive force (PMF) to complete protein translocation after the ATP-dependent function of SecA. This Rickettsia felis (strain ATCC VR-1525 / URRWXCal2) (Rickettsia azadi) protein is Protein translocase subunit SecD.